A 536-amino-acid polypeptide reads, in one-letter code: CTP synthase (536 aa).

The segment at 1-266 (MKTKFIFVTG…DEQVVEKLNI (266 aa)) is amidoligase domain. A CTP-binding site is contributed by Ser14. Ser14 is a binding site for UTP. Residues 15 to 20 (SIGKGL) and Asp72 contribute to the ATP site. Positions 72 and 140 each coordinate Mg(2+). Residues 147-149 (DIE), 187-192 (KTKPTQ), and Lys223 each bind CTP. UTP is bound by residues 187–192 (KTKPTQ) and Lys223. The Glutamine amidotransferase type-1 domain maps to 292–534 (RIAIVGKYVN…IAAALDRKDK (243 aa)). An L-glutamine-binding site is contributed by Gly354. The active-site Nucleophile; for glutamine hydrolysis is the Cys381. L-glutamine is bound by residues 382–385 (LGMQ), Glu405, and Arg462. Active-site residues include His507 and Glu509.

This sequence belongs to the CTP synthase family. As to quaternary structure, homotetramer.

The enzyme catalyses UTP + L-glutamine + ATP + H2O = CTP + L-glutamate + ADP + phosphate + 2 H(+). It carries out the reaction L-glutamine + H2O = L-glutamate + NH4(+). The catalysed reaction is UTP + NH4(+) + ATP = CTP + ADP + phosphate + 2 H(+). The protein operates within pyrimidine metabolism; CTP biosynthesis via de novo pathway; CTP from UDP: step 2/2. With respect to regulation, allosterically activated by GTP, when glutamine is the substrate; GTP has no effect on the reaction when ammonia is the substrate. The allosteric effector GTP functions by stabilizing the protein conformation that binds the tetrahedral intermediate(s) formed during glutamine hydrolysis. Inhibited by the product CTP, via allosteric rather than competitive inhibition. In terms of biological role, catalyzes the ATP-dependent amination of UTP to CTP with either L-glutamine or ammonia as the source of nitrogen. Regulates intracellular CTP levels through interactions with the four ribonucleotide triphosphates. The polypeptide is CTP synthase (Geobacter sulfurreducens (strain ATCC 51573 / DSM 12127 / PCA)).